The chain runs to 392 residues: Succinyl-diaminopimelate desuccinylase (392 aa).

H75 contacts Zn(2+). D77 is an active-site residue. D108 contributes to the Zn(2+) binding site. The Proton acceptor role is filled by E147. Positions 148, 176, and 365 each coordinate Zn(2+).

Belongs to the peptidase M20A family. DapE subfamily. Homodimer. Zn(2+) serves as cofactor. The cofactor is Co(2+).

It catalyses the reaction N-succinyl-(2S,6S)-2,6-diaminopimelate + H2O = (2S,6S)-2,6-diaminopimelate + succinate. It functions in the pathway amino-acid biosynthesis; L-lysine biosynthesis via DAP pathway; LL-2,6-diaminopimelate from (S)-tetrahydrodipicolinate (succinylase route): step 3/3. In terms of biological role, catalyzes the hydrolysis of N-succinyl-L,L-diaminopimelic acid (SDAP), forming succinate and LL-2,6-diaminopimelate (DAP), an intermediate involved in the bacterial biosynthesis of lysine and meso-diaminopimelic acid, an essential component of bacterial cell walls. The chain is Succinyl-diaminopimelate desuccinylase from Rhodopseudomonas palustris (strain BisB18).